A 224-amino-acid polypeptide reads, in one-letter code: ATP-dependent Clp protease proteolytic subunit 1 (224 aa).

S120 acts as the Nucleophile in catalysis. H145 is a catalytic residue.

This sequence belongs to the peptidase S14 family. As to quaternary structure, fourteen ClpP subunits assemble into 2 heptameric rings which stack back to back to give a disk-like structure with a central cavity, resembling the structure of eukaryotic proteasomes.

The protein localises to the cytoplasm. The catalysed reaction is Hydrolysis of proteins to small peptides in the presence of ATP and magnesium. alpha-casein is the usual test substrate. In the absence of ATP, only oligopeptides shorter than five residues are hydrolyzed (such as succinyl-Leu-Tyr-|-NHMec, and Leu-Tyr-Leu-|-Tyr-Trp, in which cleavage of the -Tyr-|-Leu- and -Tyr-|-Trp bonds also occurs).. Functionally, cleaves peptides in various proteins in a process that requires ATP hydrolysis. Has a chymotrypsin-like activity. Plays a major role in the degradation of misfolded proteins. The protein is ATP-dependent Clp protease proteolytic subunit 1 of Prochlorococcus marinus (strain MIT 9313).